The chain runs to 341 residues: MVSEAPPFWWDKPDWRALSLAPAAWLYGAVAGRRLLKAEPPKISLPVLCVGNFTVGGAGKTPTAIAFSAGAKARGLNPGIVSRGYGGAYKGLHVVDPAHDSARYVGDEPLLLARHASVALCPDRLKAARHLQALGCDFIIMDDGFQSARLFADFSLLVVDAARGIGNGKVIPAGPLRAPLTDQMRKTDALLRIGKGDGADFVIRQTARAGRPIYEARLKPSSTTPIAGNRWLAFAGIGNPEKFYASVAEAGGEIVETCSFPDHHSFASDDIRNLTDTARRQGLGLITTAKDQVRLATMIGVPAGFLTKLAVLNVDLKFDRNDALDHILDTVIERFKSRVTS.

54–61 (TVGGAGKT) contributes to the ATP binding site.

Belongs to the LpxK family.

It carries out the reaction a lipid A disaccharide + ATP = a lipid IVA + ADP + H(+). It functions in the pathway glycolipid biosynthesis; lipid IV(A) biosynthesis; lipid IV(A) from (3R)-3-hydroxytetradecanoyl-[acyl-carrier-protein] and UDP-N-acetyl-alpha-D-glucosamine: step 6/6. Transfers the gamma-phosphate of ATP to the 4'-position of a tetraacyldisaccharide 1-phosphate intermediate (termed DS-1-P) to form tetraacyldisaccharide 1,4'-bis-phosphate (lipid IVA). This is Tetraacyldisaccharide 4'-kinase from Brucella anthropi (strain ATCC 49188 / DSM 6882 / CCUG 24695 / JCM 21032 / LMG 3331 / NBRC 15819 / NCTC 12168 / Alc 37) (Ochrobactrum anthropi).